A 280-amino-acid chain; its full sequence is Chaperone protein LppX (280 aa).

Residues 1 to 18 (MRKWLIFLLIAAVAGLSA) form the signal peptide. A lipid anchor (N-palmitoyl cysteine) is attached at Cys19. The S-diacylglycerol cysteine moiety is linked to residue Cys19.

Its subcellular location is the cell membrane. In terms of biological role, is required for the expression of the adjacently encoded xylanase Xyn11E in an active form. LppX seems to act as a specific chaperone necessary for the correct folding of the xylanase during secretion across the cytoplasmic membrane. The chain is Chaperone protein LppX from Paenibacillus barcinonensis.